A 299-amino-acid polypeptide reads, in one-letter code: Oxygen-dependent coproporphyrinogen-III oxidase (299 aa).

Substrate is bound at residue serine 92. Residues histidine 96 and histidine 106 each coordinate a divalent metal cation. Residue histidine 106 is the Proton donor of the active site. Position 108-110 (108-110 (NVR)) interacts with substrate. A divalent metal cation is bound by residues histidine 145 and histidine 175. An important for dimerization region spans residues 240-275 (YVEFNLVWDRGTLFGLQTGGRTESILMSMPPLVRWE). 258–260 (GGR) serves as a coordination point for substrate.

This sequence belongs to the aerobic coproporphyrinogen-III oxidase family. Homodimer. A divalent metal cation serves as cofactor.

Its subcellular location is the cytoplasm. It catalyses the reaction coproporphyrinogen III + O2 + 2 H(+) = protoporphyrinogen IX + 2 CO2 + 2 H2O. It participates in porphyrin-containing compound metabolism; protoporphyrin-IX biosynthesis; protoporphyrinogen-IX from coproporphyrinogen-III (O2 route): step 1/1. Involved in the heme biosynthesis. Catalyzes the aerobic oxidative decarboxylation of propionate groups of rings A and B of coproporphyrinogen-III to yield the vinyl groups in protoporphyrinogen-IX. The polypeptide is Oxygen-dependent coproporphyrinogen-III oxidase (Klebsiella pneumoniae (strain 342)).